Reading from the N-terminus, the 971-residue chain is UPF0182 protein RER_22310 (971 aa).

Helical transmembrane passes span 16–36 (ILLV…RLIG), 61–81 (FVLF…AMLL), 112–132 (LFGV…AQAN), 172–192 (WLFV…YVFG), 209–229 (VQLA…YWFD), 257–277 (AKLI…ASIF), and 286–306 (MAVA…PMIV). The tract at residues 890–927 (GSAATVTQPAPDPDTGAQPETPTTPTAPAPPASSDDVT) is disordered.

Belongs to the UPF0182 family.

The protein resides in the cell membrane. This chain is UPF0182 protein RER_22310, found in Rhodococcus erythropolis (strain PR4 / NBRC 100887).